Here is a 117-residue protein sequence, read N- to C-terminus: Large ribosomal subunit protein uL18 (117 aa).

The protein belongs to the universal ribosomal protein uL18 family. As to quaternary structure, part of the 50S ribosomal subunit; part of the 5S rRNA/L5/L18/L25 subcomplex. Contacts the 5S and 23S rRNAs.

Its function is as follows. This is one of the proteins that bind and probably mediate the attachment of the 5S RNA into the large ribosomal subunit, where it forms part of the central protuberance. This Pectobacterium carotovorum subsp. carotovorum (strain PC1) protein is Large ribosomal subunit protein uL18.